The sequence spans 496 residues: Probable G-protein coupled receptor K01A12.3 (496 aa).

Topologically, residues 1 to 19 are extracellular; it reads MESVTRHRADMISFFTFDS. The chain crosses the membrane as a helical span at residues 20–40; the sequence is YISIVGVAYTAVGLLGVFCNV. Residues 41–58 are Cytoplasmic-facing; sequence TTVIMILTNRVFRLSAYT. The helical transmembrane segment at 59–79 threads the bilayer; that stretch reads IMANVALADSIVMLIAGVACG. The Extracellular portion of the chain corresponds to 80–128; sequence MDVMWPNPNDLTSFIPSLEEPYQKIAPVSLRNDSKTDSSAAGFETGNIH. N-linked (GlcNAc...) asparagine glycosylation is present at Asn-111. The chain crosses the membrane as a helical span at residues 129 to 149; that stretch reads AVLSFSFVAAWTAGVISYAML. The Cytoplasmic segment spans residues 150–169; that stretch reads GTNRCIAICYYGTKARALNQ. A helical transmembrane segment spans residues 170-190; the sequence is VSVAVACSASTWIVGIAAALV. Topologically, residues 191-216 are extracellular; that stretch reads GTLSQPMIGIQRTMWSISFLEPRPHT. Residues 217 to 237 traverse the membrane as a helical segment; sequence TLFFTLLCAANLLGLGAQWVC. At 238–285 the chain is on the cytoplasmic side; sequence STLVLLKIRQVKKKISKNKLNQNSANRFRKQVILALNEIIVTGNFKAR. The helical transmembrane segment at 286–306 threads the bilayer; sequence LTFQFFYPSILCTISTFLFFI. At 307 to 318 the chain is on the extracellular side; that stretch reads KPYAFEYLSGWQ. The helical transmembrane segment at 319–339 threads the bilayer; sequence LVILHLLWLCNHTCNPFIYAY. Over 340–496 the chain is Cytoplasmic; it reads FNDRMRLTYK…WVKFAKKASI (157 aa). A disordered region spans residues 451 to 470; that stretch reads TKELESAHNQGGSSRFDSER.

The protein belongs to the G-protein coupled receptor 1 family.

The protein localises to the cell membrane. In Caenorhabditis elegans, this protein is Probable G-protein coupled receptor K01A12.3.